A 175-amino-acid polypeptide reads, in one-letter code: Ribosome maturation factor RimM (175 aa).

Positions 99-172 (SIEFTWEHFI…KLTMIIPDGL (74 aa)) constitute a PRC barrel domain.

This sequence belongs to the RimM family. As to quaternary structure, binds ribosomal protein uS19.

The protein localises to the cytoplasm. Functionally, an accessory protein needed during the final step in the assembly of 30S ribosomal subunit, possibly for assembly of the head region. Essential for efficient processing of 16S rRNA. May be needed both before and after RbfA during the maturation of 16S rRNA. It has affinity for free ribosomal 30S subunits but not for 70S ribosomes. The protein is Ribosome maturation factor RimM of Porphyromonas gingivalis (strain ATCC BAA-308 / W83).